Reading from the N-terminus, the 146-residue chain is Snaclec coagulation factor X-activating enzyme light chain 1 (146 aa).

An N-terminal signal peptide occupies residues 1–23; that stretch reads MGRFISVSFGCLVVFLSLSGTEA. The cysteines at positions 27 and 38 are disulfide-linked. Positions 34–145 constitute a C-type lectin domain; sequence YEQHCYKGFN…CNFIAPVVCK (112 aa). An N-linked (GlcNAc...) (complex) asparagine glycan is attached at Asn47. 2 disulfides stabilise this stretch: Cys55-Cys144 and Cys121-Cys136.

Belongs to the snaclec family. In terms of assembly, heterotrimer; disulfide-linked. The heterotrimer consists of 1 heavy chain (a metalloproteinase) and 2 light chains: LC1 and LC2. Post-translationally, N-glycosylated; probably required for conformation. Removal of easily accessible sugars does not change its functional capacity, but removal of the core sugars with N-glycanase causes a virtually complete loss of enzyme activity, apparently as a result of major conformational changes in the molecule. Not O-glycosylated. As to expression, expressed by the venom gland.

The protein resides in the secreted. Functionally, regulatory subunit of the blood coagulation factor X- and IX-activating enzyme. The enzyme activates coagulation factor X (F10) by cleaving the Arg-Ile bond and is also able to activate coagulation factor IX (F9) and protein S (PROS1) by specific cleavage of Arg-Ile and Arg-Val bonds. May serve as an exosite by which the enzyme recognizes and binds to the Gla domain of factor X (F10) and factor IX (F9) in a calcium-dependent manner. The sequence is that of Snaclec coagulation factor X-activating enzyme light chain 1 (LC1) from Daboia siamensis (Eastern Russel's viper).